A 278-amino-acid chain; its full sequence is MRGEASRIADRESRDSLAPKLRDTREDAWRIGNELFTITKVLDDSIQLERALTDPSRPVADKVAVLKELLGDNAHPMTMEIMTDLVSRRWSRARDIANAVEDFGVDAMMYYADATDATLQVSIELSELHSALLNLPVVRAKLYDYQATSEARVKLFREVFSGKTLNKVTMRLAEHATCNLRRRRYLETIQWLINKFSRHMGESMVTVTTATPLKKEQIKRLVEVYSAKVGRQVHINSVVDPTVLGGMRIQVGDEVTDNTVVAQLQNLHRKVQTEATPA.

Belongs to the ATPase delta chain family. As to quaternary structure, F-type ATPases have 2 components, F(1) - the catalytic core - and F(0) - the membrane proton channel. F(1) has five subunits: alpha(3), beta(3), gamma(1), delta(1), epsilon(1). F(0) has three main subunits: a(1), b(2) and c(10-14). The alpha and beta chains form an alternating ring which encloses part of the gamma chain. F(1) is attached to F(0) by a central stalk formed by the gamma and epsilon chains, while a peripheral stalk is formed by the delta and b chains.

It localises to the cell membrane. In terms of biological role, f(1)F(0) ATP synthase produces ATP from ADP in the presence of a proton or sodium gradient. F-type ATPases consist of two structural domains, F(1) containing the extramembraneous catalytic core and F(0) containing the membrane proton channel, linked together by a central stalk and a peripheral stalk. During catalysis, ATP synthesis in the catalytic domain of F(1) is coupled via a rotary mechanism of the central stalk subunits to proton translocation. This protein is part of the stalk that links CF(0) to CF(1). It either transmits conformational changes from CF(0) to CF(1) or is implicated in proton conduction. In Bifidobacterium longum (strain DJO10A), this protein is ATP synthase subunit delta.